The chain runs to 319 residues: MFRFDKEQMVIEFAGAKFGGQPGEYPTALSGTIFYARHKIVEDAKKGIFDKKAAEALINKQAEMQDITGNSAFVQVFGGTEEALVNYIDFVSEVWDGPMLLDSTSGKARMAAANRATEAGYAKQCVYNSINVAAEDEEIENLTNSDVEASIVLCFDPMDPSVGGKLNVLNDGGKTKDIGMLELAEKAGIKYPLIDVAVTPMGNGAGHAVRASFAVKAKLGLPVGSGIHNVPSAWDWLREFRKGLREEGKDQISKDVHHVCDIGANIVQTMASGDYVLYGPIDNAELAFPAVAMTDMIIAETAKEMGTATVAEHPLNKLI.

The protein belongs to the MtrH family. The complex is composed of 8 subunits; MtrA, MtrB, MtrC, MtrD, MtrE, MtrF, MtrG and MtrH.

The catalysed reaction is 5-methyl-5,6,7,8-tetrahydromethanopterin + coenzyme M + 2 Na(+)(in) = 5,6,7,8-tetrahydromethanopterin + methyl-coenzyme M + 2 Na(+)(out). It functions in the pathway one-carbon metabolism; methanogenesis from CO(2); methyl-coenzyme M from 5,10-methylene-5,6,7,8-tetrahydromethanopterin: step 2/2. Part of a complex that catalyzes the formation of methyl-coenzyme M and tetrahydromethanopterin from coenzyme M and methyl-tetrahydromethanopterin. This is an energy-conserving, sodium-ion translocating step. MtrH catalyzes the transfer of the methyl group from methyl-tetrahydromethanopterin to the corrinoid prosthetic group of MtrA. In Methanococcus maripaludis (strain C5 / ATCC BAA-1333), this protein is Tetrahydromethanopterin S-methyltransferase subunit H.